Consider the following 151-residue polypeptide: Small ribosomal subunit protein uS15 (151 aa).

Serine 32 bears the Phosphoserine mark. Glycyl lysine isopeptide (Lys-Gly) (interchain with G-Cter in ubiquitin) cross-links involve residues lysine 39 and lysine 43.

It belongs to the universal ribosomal protein uS15 family. As to quaternary structure, component of the small ribosomal subunit (SSU). Mature yeast ribosomes consist of a small (40S) and a large (60S) subunit. The 40S small subunit contains 1 molecule of ribosomal RNA (18S rRNA) and 33 different proteins (encoded by 57 genes). The large 60S subunit contains 3 rRNA molecules (25S, 5.8S and 5S rRNA) and 46 different proteins (encoded by 81 genes).

It is found in the cytoplasm. Its function is as follows. Component of the ribosome, a large ribonucleoprotein complex responsible for the synthesis of proteins in the cell. The small ribosomal subunit (SSU) binds messenger RNAs (mRNAs) and translates the encoded message by selecting cognate aminoacyl-transfer RNA (tRNA) molecules. The large subunit (LSU) contains the ribosomal catalytic site termed the peptidyl transferase center (PTC), which catalyzes the formation of peptide bonds, thereby polymerizing the amino acids delivered by tRNAs into a polypeptide chain. The nascent polypeptides leave the ribosome through a tunnel in the LSU and interact with protein factors that function in enzymatic processing, targeting, and the membrane insertion of nascent chains at the exit of the ribosomal tunnel. The protein is Small ribosomal subunit protein uS15 of Saccharomyces cerevisiae (strain ATCC 204508 / S288c) (Baker's yeast).